The sequence spans 106 residues: Nucleoid-associated protein PD_1058 (106 aa).

Belongs to the YbaB/EbfC family. As to quaternary structure, homodimer.

Its subcellular location is the cytoplasm. The protein localises to the nucleoid. Binds to DNA and alters its conformation. May be involved in regulation of gene expression, nucleoid organization and DNA protection. The polypeptide is Nucleoid-associated protein PD_1058 (Xylella fastidiosa (strain Temecula1 / ATCC 700964)).